Here is an 83-residue protein sequence, read N- to C-terminus: Neurotoxin LmNaTx34.5 (83 aa).

Residues phenylalanine 1–serine 15 form the signal peptide. Residues aspartate 16–serine 82 form the LCN-type CS-alpha/beta domain. Intrachain disulfides connect cysteine 29–cysteine 81, cysteine 33–cysteine 54, cysteine 40–cysteine 61, and cysteine 44–cysteine 63.

This sequence belongs to the long (4 C-C) scorpion toxin superfamily. Sodium channel inhibitor family. Beta subfamily. As to expression, expressed by the venom gland.

It is found in the secreted. Binds voltage-independently at site-4 of sodium channels (Nav) and shift the voltage of activation toward more negative potentials thereby affecting sodium channel activation and promoting spontaneous and repetitive firing. The polypeptide is Neurotoxin LmNaTx34.5 (Lychas mucronatus (Chinese swimming scorpion)).